We begin with the raw amino-acid sequence, 427 residues long: Carboxyl-terminal-processing protease (427 aa).

Residues 1–31 form the signal peptide; the sequence is MGKRTRRFWALAFSLLMGALIYLGNTPSALA. Residues 104 to 186 enclose the PDZ domain; it reads NLQVTTTGEL…TKVSLEILSA (83 aa). Active-site charge relay system residues include S313, D324, and K338.

The protein belongs to the peptidase S41A family.

It is found in the cellular thylakoid lumen. The enzyme catalyses The enzyme shows specific recognition of a C-terminal tripeptide, Xaa-Yaa-Zaa, in which Xaa is preferably Ala or Leu, Yaa is preferably Ala or Tyr, and Zaa is preferably Ala, but then cleaves at a variable distance from the C-terminus. A typical cleavage is -Ala-Ala-|-Arg-Ala-Ala-Lys-Glu-Asn-Tyr-Ala-Leu-Ala-Ala.. Functionally, cleavage of the 16 C-terminal residues from the D1 precursor of photosystem II (PSII). This proteolytic processing is necessary to allow the light-driven assembly of the oxygen-evolving cluster (a tetranuclear manganese), which is responsible for photosynthetic water oxidation. The protein is Carboxyl-terminal-processing protease (ctpA) of Synechocystis sp. (strain ATCC 27184 / PCC 6803 / Kazusa).